The chain runs to 96 residues: Pyrimidine/purine nucleoside phosphorylase (96 aa).

It belongs to the nucleoside phosphorylase PpnP family.

It catalyses the reaction a purine D-ribonucleoside + phosphate = a purine nucleobase + alpha-D-ribose 1-phosphate. The catalysed reaction is adenosine + phosphate = alpha-D-ribose 1-phosphate + adenine. The enzyme catalyses cytidine + phosphate = cytosine + alpha-D-ribose 1-phosphate. It carries out the reaction guanosine + phosphate = alpha-D-ribose 1-phosphate + guanine. It catalyses the reaction inosine + phosphate = alpha-D-ribose 1-phosphate + hypoxanthine. The catalysed reaction is thymidine + phosphate = 2-deoxy-alpha-D-ribose 1-phosphate + thymine. The enzyme catalyses uridine + phosphate = alpha-D-ribose 1-phosphate + uracil. It carries out the reaction xanthosine + phosphate = alpha-D-ribose 1-phosphate + xanthine. In terms of biological role, catalyzes the phosphorolysis of diverse nucleosides, yielding D-ribose 1-phosphate and the respective free bases. Can use uridine, adenosine, guanosine, cytidine, thymidine, inosine and xanthosine as substrates. Also catalyzes the reverse reactions. This chain is Pyrimidine/purine nucleoside phosphorylase, found in Serratia proteamaculans (strain 568).